We begin with the raw amino-acid sequence, 318 residues long: Thymidylate synthase (318 aa).

Residues R25 and 180 to 181 (RR) each bind dUMP. C200 (nucleophile) is an active-site residue. DUMP is bound by residues 220-223 (RSGD), N231, and 261-263 (HIY). Position 223 (D223) interacts with (6R)-5,10-methylene-5,6,7,8-tetrahydrofolate. Residue A317 coordinates (6R)-5,10-methylene-5,6,7,8-tetrahydrofolate.

The protein belongs to the thymidylate synthase family. Bacterial-type ThyA subfamily. As to quaternary structure, homodimer.

The protein resides in the cytoplasm. The catalysed reaction is dUMP + (6R)-5,10-methylene-5,6,7,8-tetrahydrofolate = 7,8-dihydrofolate + dTMP. It functions in the pathway pyrimidine metabolism; dTTP biosynthesis. Its function is as follows. Catalyzes the reductive methylation of 2'-deoxyuridine-5'-monophosphate (dUMP) to 2'-deoxythymidine-5'-monophosphate (dTMP) while utilizing 5,10-methylenetetrahydrofolate (mTHF) as the methyl donor and reductant in the reaction, yielding dihydrofolate (DHF) as a by-product. This enzymatic reaction provides an intracellular de novo source of dTMP, an essential precursor for DNA biosynthesis. This Bacillus cereus (strain ATCC 14579 / DSM 31 / CCUG 7414 / JCM 2152 / NBRC 15305 / NCIMB 9373 / NCTC 2599 / NRRL B-3711) protein is Thymidylate synthase.